The sequence spans 97 residues: Small ribosomal subunit protein uS19 (97 aa).

Residues 74–97 (FSPTRRFGGHPDKKAVKGKIEKQG) form a disordered region. Residues 82-97 (GHPDKKAVKGKIEKQG) show a composition bias toward basic and acidic residues.

It belongs to the universal ribosomal protein uS19 family.

In terms of biological role, protein S19 forms a complex with S13 that binds strongly to the 16S ribosomal RNA. The polypeptide is Small ribosomal subunit protein uS19 (Petrotoga mobilis (strain DSM 10674 / SJ95)).